The chain runs to 456 residues: Arginine biosynthesis bifunctional protein ArgJ, mitochondrial (456 aa).

Positions 184, 213, 224, 311, 451, and 456 each coordinate substrate. Residue threonine 224 is the Nucleophile of the active site.

Belongs to the ArgJ family. Heterodimer of an alpha and a beta chain. Post-translationally, the alpha and beta chains are autoproteolytically processed from a single precursor protein within the mitochondrion.

It is found in the mitochondrion matrix. It catalyses the reaction N(2)-acetyl-L-ornithine + L-glutamate = N-acetyl-L-glutamate + L-ornithine. The catalysed reaction is L-glutamate + acetyl-CoA = N-acetyl-L-glutamate + CoA + H(+). It participates in amino-acid biosynthesis; L-arginine biosynthesis; L-ornithine and N-acetyl-L-glutamate from L-glutamate and N(2)-acetyl-L-ornithine (cyclic): step 1/1. Its pathway is amino-acid biosynthesis; L-arginine biosynthesis; N(2)-acetyl-L-ornithine from L-glutamate: step 1/4. In terms of biological role, catalyzes two activities which are involved in the cyclic version of arginine biosynthesis: the synthesis of acetylglutamate from glutamate and acetyl-CoA, and of ornithine by transacetylation between acetylornithine and glutamate. The chain is Arginine biosynthesis bifunctional protein ArgJ, mitochondrial from Aspergillus niger (strain ATCC MYA-4892 / CBS 513.88 / FGSC A1513).